The primary structure comprises 199 residues: Pre T-cell antigen receptor alpha (199 aa).

The N-terminal stretch at 1–16 (MARTWLLLLLGVRCQA) is a signal peptide. Residues 17–146 (LPSGIAGTPF…PEPLGGTQRQ (130 aa)) lie on the Extracellular side of the membrane. A disulfide bridge links C47 with C107. Residues N67 and N117 are each glycosylated (N-linked (GlcNAc...) asparagine). Residues 147-167 (VLWLSLLRLLLFKLLLLDVLL) traverse the membrane as a helical segment. Over 168 to 199 (TCSHLRLHVLAGQHLQPPPSRKSLPPTHRIWT) the chain is Cytoplasmic.

In terms of assembly, heterodimer with TCRB; disulfide linked. This heterodimer assembles with CD3 proteins into a signaling-competent pre-T-cell receptor complex. Interacts with RHBDD1. In terms of tissue distribution, isoform 1 is expressed at higher levels than isoform 2 in the thymus while only isoform 2 is expressed in polyclonal beta-only cells. Isoform 1 shows a predominant expression in immature thymocytes.

It localises to the membrane. Its subcellular location is the cell membrane. Functionally, component of the pre-T-cell receptor complex (composed of PTCRA, TCRB and the CD3 complex) that plays a crucial role in early T-cell development, particularly alpha-beta T cell differentiation. Isoform 1 acts to retain most TCRB intracellularly, while isoform 2 permits higher levels of cell surface TCRB expression and facilitates signaling from the CD3-TCRB complex. The protein is Pre T-cell antigen receptor alpha of Mus musculus (Mouse).